A 335-amino-acid chain; its full sequence is Tetraacyldisaccharide 4'-kinase (335 aa).

ATP is bound at residue 59–66; the sequence is TAGGNGKT.

The protein belongs to the LpxK family.

The catalysed reaction is a lipid A disaccharide + ATP = a lipid IVA + ADP + H(+). It participates in glycolipid biosynthesis; lipid IV(A) biosynthesis; lipid IV(A) from (3R)-3-hydroxytetradecanoyl-[acyl-carrier-protein] and UDP-N-acetyl-alpha-D-glucosamine: step 6/6. Its function is as follows. Transfers the gamma-phosphate of ATP to the 4'-position of a tetraacyldisaccharide 1-phosphate intermediate (termed DS-1-P) to form tetraacyldisaccharide 1,4'-bis-phosphate (lipid IVA). The chain is Tetraacyldisaccharide 4'-kinase from Vibrio vulnificus (strain YJ016).